Here is a 322-residue protein sequence, read N- to C-terminus: Acetyl-coenzyme A carboxylase carboxyl transferase subunit alpha (322 aa).

The 264-residue stretch at 30–293 folds into the CoA carboxyltransferase C-terminal domain; it reads ALDISAEIAR…KQTLQESLRK (264 aa).

This sequence belongs to the AccA family. As to quaternary structure, acetyl-CoA carboxylase is a heterohexamer composed of biotin carboxyl carrier protein (AccB), biotin carboxylase (AccC) and two subunits each of ACCase subunit alpha (AccA) and ACCase subunit beta (AccD).

The protein localises to the cytoplasm. It catalyses the reaction N(6)-carboxybiotinyl-L-lysyl-[protein] + acetyl-CoA = N(6)-biotinyl-L-lysyl-[protein] + malonyl-CoA. Its pathway is lipid metabolism; malonyl-CoA biosynthesis; malonyl-CoA from acetyl-CoA: step 1/1. Functionally, component of the acetyl coenzyme A carboxylase (ACC) complex. First, biotin carboxylase catalyzes the carboxylation of biotin on its carrier protein (BCCP) and then the CO(2) group is transferred by the carboxyltransferase to acetyl-CoA to form malonyl-CoA. This chain is Acetyl-coenzyme A carboxylase carboxyl transferase subunit alpha, found in Nitrosomonas europaea (strain ATCC 19718 / CIP 103999 / KCTC 2705 / NBRC 14298).